Reading from the N-terminus, the 467-residue chain is Pup--protein ligase (467 aa).

Glutamate 12 contributes to the Mg(2+) binding site. Arginine 56 serves as a coordination point for ATP. Tyrosine 58 is a binding site for Mg(2+). Aspartate 60 functions as the Proton acceptor in the catalytic mechanism. A Mg(2+)-binding site is contributed by glutamate 66. ATP contacts are provided by threonine 69 and tryptophan 431.

It belongs to the Pup ligase/Pup deamidase family. Pup-conjugating enzyme subfamily.

It carries out the reaction ATP + [prokaryotic ubiquitin-like protein]-L-glutamate + [protein]-L-lysine = ADP + phosphate + N(6)-([prokaryotic ubiquitin-like protein]-gamma-L-glutamyl)-[protein]-L-lysine.. It functions in the pathway protein degradation; proteasomal Pup-dependent pathway. It participates in protein modification; protein pupylation. Its function is as follows. Catalyzes the covalent attachment of the prokaryotic ubiquitin-like protein modifier Pup to the proteasomal substrate proteins, thereby targeting them for proteasomal degradation. This tagging system is termed pupylation. The ligation reaction involves the side-chain carboxylate of the C-terminal glutamate of Pup and the side-chain amino group of a substrate lysine. In Corynebacterium jeikeium (strain K411), this protein is Pup--protein ligase.